Here is a 417-residue protein sequence, read N- to C-terminus: Tyrosine--tRNA ligase (417 aa).

Residue Tyr-39 participates in L-tyrosine binding. A 'HIGH' region motif is present at residues 44–53; it reads PTASSLHAGS. Residues Tyr-176 and Gln-180 each contribute to the L-tyrosine site. Positions 236–240 match the 'KMSKS' region motif; that stretch reads KMGKS. Residue Lys-239 coordinates ATP. The S4 RNA-binding domain maps to 350–417; the sequence is TGLLILLVQA…KKKHVLIKPL (68 aa).

This sequence belongs to the class-I aminoacyl-tRNA synthetase family. TyrS type 1 subfamily. As to quaternary structure, homodimer.

Its subcellular location is the cytoplasm. The catalysed reaction is tRNA(Tyr) + L-tyrosine + ATP = L-tyrosyl-tRNA(Tyr) + AMP + diphosphate + H(+). Its function is as follows. Catalyzes the attachment of tyrosine to tRNA(Tyr) in a two-step reaction: tyrosine is first activated by ATP to form Tyr-AMP and then transferred to the acceptor end of tRNA(Tyr). In Bartonella henselae (strain ATCC 49882 / DSM 28221 / CCUG 30454 / Houston 1) (Rochalimaea henselae), this protein is Tyrosine--tRNA ligase.